Consider the following 525-residue polypeptide: GMP synthase [glutamine-hydrolyzing] (525 aa).

Residues 9–207 (RILILDFGSQ…VRDICQCEAL (199 aa)) form the Glutamine amidotransferase type-1 domain. Cysteine 86 serves as the catalytic Nucleophile. Catalysis depends on residues histidine 181 and glutamate 183. The region spanning 208-400 (WTPAKIIDDA…LGLPYDMLYR (193 aa)) is the GMPS ATP-PPase domain. Position 235–241 (235–241 (SGGVDSS)) interacts with ATP.

Homodimer.

It carries out the reaction XMP + L-glutamine + ATP + H2O = GMP + L-glutamate + AMP + diphosphate + 2 H(+). The protein operates within purine metabolism; GMP biosynthesis; GMP from XMP (L-Gln route): step 1/1. Functionally, catalyzes the synthesis of GMP from XMP. This Shigella sonnei (strain Ss046) protein is GMP synthase [glutamine-hydrolyzing].